We begin with the raw amino-acid sequence, 445 residues long: MDIKFYTEKLAREARESQKFLRRVTTDIKNRVLLRTAELLIEKKEIIKEANDKDLEFAQKKGYSKALLDRLTLNEKRINGMVQVLKDVASLPDPVGEIISMWTRPNGLRVGQMRVPLGTVMIIYEARPNVTVEAASLCIKSSNAVILKGGSETINSNRVLVEILRQAARESGFPERAIQFVDTTDREAVNHLLTLDQYIDVVIPRGGEGLIRAVAEKATMPVIKHYKGVCNLYIDDEADMEKALNIAYNAKVERPSVCNAIENLIVHKDIAEKFLPEIAYYYGKAGVEMRCDERALEILRDHPKANDTEIVPAKEDDYYEEFLDLIIAVKVVDSIDQAIDFIHKYGSNHSESIVTENYTKGMRFINEVDSSAVYINASTRFTDGNEFGLGAEMGISTDKIHVRGPMGLKELTIPKFIIFGDGQIRNNVGIPEDEEIKIDTEKCEM.

This sequence belongs to the gamma-glutamyl phosphate reductase family.

It is found in the cytoplasm. The catalysed reaction is L-glutamate 5-semialdehyde + phosphate + NADP(+) = L-glutamyl 5-phosphate + NADPH + H(+). The protein operates within amino-acid biosynthesis; L-proline biosynthesis; L-glutamate 5-semialdehyde from L-glutamate: step 2/2. Catalyzes the NADPH-dependent reduction of L-glutamate 5-phosphate into L-glutamate 5-semialdehyde and phosphate. The product spontaneously undergoes cyclization to form 1-pyrroline-5-carboxylate. This Persephonella marina (strain DSM 14350 / EX-H1) protein is Gamma-glutamyl phosphate reductase.